A 67-amino-acid polypeptide reads, in one-letter code: Putative cytosolic sulfotransferase 2 (67 aa).

A 3'-phosphoadenylyl sulfate-binding site is contributed by 31–33 (RDG).

The protein belongs to the sulfotransferase 1 family.

The protein localises to the cytoplasm. Functionally, sulfotransferase that utilizes 3'-phospho-5'-adenylyl sulfate (PAPS) as sulfonate donor. This chain is Putative cytosolic sulfotransferase 2 (SOT2), found in Arabidopsis thaliana (Mouse-ear cress).